Here is a 182-residue protein sequence, read N- to C-terminus: Large ribosomal subunit protein bL25 (182 aa).

Belongs to the bacterial ribosomal protein bL25 family. CTC subfamily. Part of the 50S ribosomal subunit; part of the 5S rRNA/L5/L18/L25 subcomplex. Contacts the 5S rRNA. Binds to the 5S rRNA independently of L5 and L18.

In terms of biological role, this is one of the proteins that binds to the 5S RNA in the ribosome where it forms part of the central protuberance. This is Large ribosomal subunit protein bL25 from Borrelia hermsii (strain HS1 / DAH).